Reading from the N-terminus, the 354-residue chain is (R,R)-butanediol dehydrogenase (354 aa).

An Enoyl reductase (ER) domain is found at Gly-10–Val-350. Zn(2+) contacts are provided by Cys-37, His-71, and Glu-157.

The protein belongs to the zinc-containing alcohol dehydrogenase family. The cofactor is Zn(2+).

It catalyses the reaction (R,R)-butane-2,3-diol + NAD(+) = (R)-acetoin + NADH + H(+). It carries out the reaction (S)-acetoin + NAD(+) = diacetyl + NADH + H(+). NAD-dependent butanediol dehydrogenase which catalyzes the oxidation of (R,R)-butane-2,3-diol to (3R)-acetoin and of meso-butane-2,3-diol to (3S)-acetoin. Preferentially oxidizes (R,R)-butane-2,3-diol, with a catalytic efficiency approximately fourfold higher than with meso-butane-2,3-diol. Shows a very low activity with (S,S)-butane-2,3-diol. Can also catalyze the reduction of (3R/3S)-acetoin and diacetyl in the presence of NADH. This Neisseria gonorrhoeae (strain ATCC 700825 / FA 1090) protein is (R,R)-butanediol dehydrogenase.